A 354-amino-acid chain; its full sequence is MATRYWIAALPVADDNVAAGKTALWARLQEAISRHSFDTPLYRFTVPDLRPGTLDSLLALSDDLVKSNIFIEGVSHKIRRQIEDLERAGGVEPGTLTVDGVPVDSYLTRFVWDEGKYPVNAPLKETVASIQSQVAKIEDDMKVRVAEYGNVKSQLGAINRKQTGSLAVRDLSNLIKPEDMVTSEHLVTLLSIVPKYSQKDWLASYESLDTFVVPRSSKKLYEDNEYALYTVTLFAKVVDNFKVHAREKGFQIRDFEYSPEAQESRKQELEKLLQDQEVMRTSPIAMGAMLATVRVFSSWDAFSSAVRVFVESILRYGSACTVPVCCPSTIYKEREKSKEHLGRAMRQYQQLLEI.

Belongs to the V-ATPase C subunit family. As to quaternary structure, V-ATPase is a heteromultimeric enzyme composed of a peripheral catalytic V1 complex (components A to H) attached to an integral membrane V0 proton pore complex (components: a, c, c', c'' and d).

It localises to the vacuole membrane. Functionally, subunit of the peripheral V1 complex of vacuolar ATPase. Subunit C is necessary for the assembly of the catalytic sector of the enzyme and is likely to have a specific function in its catalytic activity. V-ATPase is responsible for acidifying a variety of intracellular compartments in eukaryotic cells. The chain is V-type proton ATPase subunit C (VATC) from Hordeum vulgare (Barley).